We begin with the raw amino-acid sequence, 63 residues long: Movement protein TGBp3 (63 aa).

A helical membrane pass occupies residues 1–21; it reads MIVYVLVGLSAFCIVLYLISQ. The Cytoplasmic segment spans residues 22-63; the sequence is GQSDCVVLITGESVRVQGCRIDGEFGSVLSKLKPFGCGSFRS.

The protein belongs to the Tymovirales TGBp3 protein family.

The protein resides in the host endoplasmic reticulum membrane. Its function is as follows. Plays a role in viral cell-to-cell propagation, by facilitating genome transport to neighboring plant cells through plasmosdesmata. May induce the formation of granular vesicles derived from the Endoplasmic reticulum, which align on actin filaments. The chain is Movement protein TGBp3 from Solanum tuberosum (Potato).